Here is a 458-residue protein sequence, read N- to C-terminus: DNA repair protein RadA (458 aa).

The C4-type zinc-finger motif lies at 10-27 (CQSCGYESPKWMGKCPGC). 98-105 (GDPGIGKS) provides a ligand contact to ATP. The RadA KNRFG motif motif lies at 255–259 (KNRFG). A lon-protease-like region spans residues 354–458 (DAYLKVAGGV…AEALRTSLGG (105 aa)).

It belongs to the RecA family. RadA subfamily. As to quaternary structure, interacts with DisA.

In terms of biological role, DNA-dependent ATPase involved in processing of recombination intermediates, plays a role in repairing DNA breaks. Stimulates the branch migration of RecA-mediated strand transfer reactions, allowing the 3' invading strand to extend heteroduplex DNA faster. Binds ssDNA in the presence of ADP but not other nucleotides, has ATPase activity that is stimulated by ssDNA and various branched DNA structures, but inhibited by SSB. Does not have RecA's homology-searching function. Functionally, plays a role in DNA repair. Might stabilize or process Holliday junction intermediates. May work with DisA following methyl methanesulfonate (MMS) but not H(2)O(2) damage; DisA is a DNA integrity scanning protein with c-di-AMP synthase activity. This is DNA repair protein RadA from Bacillus subtilis (strain 168).